We begin with the raw amino-acid sequence, 466 residues long: Asparagine--tRNA ligase (466 aa).

The protein belongs to the class-II aminoacyl-tRNA synthetase family. Homodimer.

The protein resides in the cytoplasm. It catalyses the reaction tRNA(Asn) + L-asparagine + ATP = L-asparaginyl-tRNA(Asn) + AMP + diphosphate + H(+). This chain is Asparagine--tRNA ligase, found in Photorhabdus laumondii subsp. laumondii (strain DSM 15139 / CIP 105565 / TT01) (Photorhabdus luminescens subsp. laumondii).